The following is a 336-amino-acid chain: N6-methyladenosine RNA methyltransferase MTA1 (336 aa).

Residues 61–83 (LISSEPPHLPFKTPEPKAGSGGL) form a disordered region.

Belongs to the MT-A70-like family.

It catalyses the reaction an adenosine in mRNA + S-adenosyl-L-methionine = an N(6)-methyladenosine in mRNA + S-adenosyl-L-homocysteine + H(+). In terms of biological role, N6-methyladenosine RNA methyltransferase that plays a crucial role in fungal phenotypic traits, virulence, and stress tolerance. Mediates the methylation of mRNAs to produce N6-methyladenosine (m6A)-containing mRNAs. M6A is a modification present at internal sites of mRNAs and some non-coding RNAs and plays a role in mRNA stability and processing. Mediates specifically acid phosphatase APHA mRNA stability through a YTHDF1-dependent m6A modification of the A1306, A1341, and A1666 key methylation modification sites. Also mediates the stability of the transcription factor ZAP1 mRNA via modification of residue A1935 localized in the 3'UTR. The chain is N6-methyladenosine RNA methyltransferase MTA1 from Cryphonectria parasitica (strain ATCC 38755 / EP155).